A 2126-amino-acid polypeptide reads, in one-letter code: Serine/threonine-protein kinase WNK1 (2126 aa).

2 disordered regions span residues 1 to 80 (MSDG…FFRR) and 93 to 202 (LPGL…QQQD). S17 carries the post-translational modification Phosphoserine. Residues 48-64 (RTEEYRRRRHTMDKDSR) show a composition bias toward basic and acidic residues. T58 is subject to Phosphothreonine. Composition is skewed to low complexity over residues 101–111 (PQPSVPAVVPQ) and 127–141 (VASQ…AASP). A phosphoserine mark is found at S165 and S172. Positions 221-479 (LKFDIEIGRG…IKDLLNHAFF (259 aa)) constitute a Protein kinase domain. ATP is bound at residue S231. Positions 283 and 299 each coordinate chloride. ATP-binding positions include 301 to 304 (TELM) and K351. Residue D368 is the Proton acceptor of the active site. Chloride-binding residues include L369 and L371. A phosphoserine; by autocatalysis mark is found at S378 and S382. The autoinhibitory domain stretch occupies residues 488–555 (ELAEEDDGEK…VCEGDHKTMA (68 aa)). The segment covering 573–588 (QLVREEQEKRKQEESS) has biased composition (basic and acidic residues). The tract at residues 573–865 (QLVREEQEKR…SRHEKTSRPK (293 aa)) is disordered. Residues 593–614 (NEQQASVSQAGIQPLSVASTGI) show a composition bias toward polar residues. Residues 615 to 626 (PTAPTTSASVST) are compositionally biased toward low complexity. Residues 629–639 (EPEEPEADQHQ) form an interaction with KLHL3 region. Polar residues-rich tracts occupy residues 638–682 (HQQL…GSQH), 695–705 (TVSSIQAQSQP), and 713–733 (SMAQ…VLSS). Residues 734–746 (QPVQHPQQQGIQP) are compositionally biased toward low complexity. The segment covering 750–789 (PQQAVQYSLPQAASSSEGTVQPVSQPQVSAGTQSSTQGVS) has biased composition (polar residues). Low complexity predominate over residues 793–823 (PPEQTPITQSQPTQPVPLVSSVDSAHSDVAS). Residues 826–836 (SDGNENAPSSS) show a composition bias toward polar residues. A compositionally biased stretch (basic residues) spans 844–865 (TKRHYRKSVRSRSRHEKTSRPK). The short motif at 1003-1006 (RFIV) is the RFXV motif 1 element. S1007 is subject to Phosphoserine. 2 disordered regions span residues 1474–1507 (GQVS…LTKT) and 1557–1595 (IPVT…ASSS). A compositionally biased stretch (low complexity) spans 1477 to 1496 (STPGTHASAPASTATGAKPG). Positions 1567-1583 (STMSSTAVTEAGSQPQK) are enriched in polar residues. An RFXV motif 2 motif is present at residues 1604–1607 (RFQV). Residues 1610-1695 (TMDDAQKERK…TKVGRFQVTT (86 aa)) form a disordered region. The span at 1613 to 1629 (DAQKERKNRSEDTKSVH) shows a compositional bias: basic and acidic residues. Residues 1632-1650 (SSTSESSVLSSSSPESTLV) show a composition bias toward low complexity. Short sequence motifs (RFXV motif) lie at residues 1690-1693 (RFQV) and 1702-1705 (RFSV). Residues 1709 to 1719 (EDKVTELKKEG) show a composition bias toward basic and acidic residues. Disordered stretches follow at residues 1709–1783 (EDKV…LCSK), 1856–1940 (VIIP…NLYS), and 1952–1990 (SLSA…KGTF). At S1723 the chain carries Phosphoserine. Residues 1738–1747 (PKKEKPELAE) show a composition bias toward basic and acidic residues. A phosphoserine mark is found at S1755, S1756, S1771, S1773, S1776, and S1865. The span at 1866–1878 (GRRRRPTKSKGSK) shows a compositional bias: basic residues. The span at 1879-1889 (SSRSSSLGNKS) shows a compositional bias: low complexity. Polar residues predominate over residues 1890–1940 (PQLSGNLSGQSGTSVLNPQQTLHPPGNTPETGHNQLLQPLKPSPSSDNLYS). Over residues 1957-1981 (GQGTSSTNTVGGTVSSQAAQAQPPA) the composition is skewed to low complexity. Residues 1985–2005 (SRKGTFTDDLHKLVDNWARDA) form an amphipathic alpha-helix region. A phosphoserine mark is found at S2014 and S2030. Residues 2076 to 2097 (PFGTQWSGTGGPAPQPLGQFQP) form a disordered region. 2 positions are modified to phosphoserine: S2114 and S2116.

The protein belongs to the protein kinase superfamily. Ser/Thr protein kinase family. WNK subfamily. Interacts with WNK3. Interacts with WNK4; inhibiting the activity of WNK4. Interacts with SGK1; promoting its activation. Associates with the mTORC2 complex. Interacts with UVRAG. Interacts (via amphipathic alpha-helix region) with EMC2; promoting the ER membrane protein complex assembly. As to quaternary structure, interacts with isoform 1; inhibiting isoform 1 activity. It depends on Mg(2+) as a cofactor. Autophosphorylated at Ser-378 and Ser-382, promoting its activity. Autophosphorylation at Ser-382 is inhibited by intracellular calcium. Phosphorylation at Thr-58 increases ability to activate SGK1. Post-translationally, ubiquitinated by the BCR(KLHL3) complex, leading to its degradation. Also ubiquitinated by the BCR(KLHL2) complex. In terms of processing, may be O-glycosylated.

The protein localises to the cytoplasm. It is found in the nucleus. The protein resides in the cytoskeleton. It localises to the spindle. The catalysed reaction is L-seryl-[protein] + ATP = O-phospho-L-seryl-[protein] + ADP + H(+). It carries out the reaction L-threonyl-[protein] + ATP = O-phospho-L-threonyl-[protein] + ADP + H(+). Activated in response to hyperosmotic stress: cell shrinkage promotes formation of a membraneless compartment that concentrates WNK1 with its substrates, OXSR1/OSR1 and STK39/SPAK. Activation requires autophosphorylation of Ser-382 and, to a lower extent, Ser-378. Autophosphorylation and subsequent activation is inhibited by increases in intracellular ionic strength: Cl(-) potently inhibits WNK1 kinase activity via direct binding. Also inhibited by K(+) ions. Inhibited by Compound 12 ((5-Chloro-2-(2-((methyl-d3)amino)thiazol-4-yl)- pyridin-4-yl)(4-(4-chlorobenzyl)piperazin-1-yl)methanone). In terms of biological role, serine/threonine-protein kinase component of the WNK1-SPAK/OSR1 kinase cascade, which acts as a key regulator of blood pressure and regulatory volume increase by promoting ion influx. WNK1 mediates regulatory volume increase in response to hyperosmotic stress by acting as a molecular crowding sensor, which senses cell shrinkage and mediates formation of a membraneless compartment by undergoing liquid-liquid phase separation. The membraneless compartment concentrates WNK1 with its substrates, OXSR1/OSR1 and STK39/SPAK, promoting WNK1-dependent phosphorylation and activation of downstream kinases OXSR1/OSR1 and STK39/SPAK. Following activation, OXSR1/OSR1 and STK39/SPAK catalyze phosphorylation of ion cotransporters SLC12A1/NKCC2, SLC12A2/NKCC1, SLC12A5/KCC2 and SLC12A6/KCC3, regulating their activity. Phosphorylation of Na-K-Cl cotransporters SLC12A2/NKCC1 and SLC12A2/NKCC1 promote their activation and ion influx; simultaneously, phosphorylation of K-Cl cotransporters SLC12A5/KCC2 and SLC12A6/KCC3 inhibit their activity, blocking ion efflux. Also acts as a regulator of angiogenesis in endothelial cells. Also acts independently of the WNK1-SPAK/OSR1 kinase cascade by catalyzing phosphorylation of other substrates, such as SYT2, PCF11 and NEDD4L. Mediates phosphorylation of SYT2, regulating SYT2 association with phospholipids and membrane-binding. Regulates mRNA export in the nucleus by mediating phosphorylation of PCF11, thereby decreasing the association between PCF11 and POLR2A/RNA polymerase II and promoting mRNA export to the cytoplasm. Acts as a negative regulator of autophagy. Required for the abscission step during mitosis, independently of the WNK1-SPAK/OSR1 kinase cascade. WNK1 may also play a role in actin cytoskeletal reorganization. Also acts as a scaffold protein independently of its protein kinase activity: negatively regulates cell membrane localization of various transporters and channels, such as SLC4A4, SLC26A6, SLC26A9, TRPV4 and CFTR. Involved in the regulation of epithelial Na(+) channel (ENaC) by promoting activation of SGK1 in a kinase-independent manner. Probably activates SGK1 by acting as a scaffold protein that promotes the recruitment of SGK1 to the mTORC2 complex in response to chloride, leading to mTORC2-dependent phosphorylation and activation of SGK1. Acts as an assembly factor for the ER membrane protein complex independently of its protein kinase activity: associates with EMC2 in the cytoplasm via its amphipathic alpha-helix, and prevents EMC2 ubiquitination and subsequent degradation, thereby promoting EMC2 stabilization. Kinase-defective isoform specifically expressed in kidney, which acts as a dominant-negative regulator of the longer isoform 1. Does not directly inhibit WNK4 and has no direct effect on sodium and chloride ion transport. Down-regulates sodium-chloride cotransporter activity indirectly by inhibiting isoform 1, it associates with isoform 1 and attenuates its kinase activity. In kidney, may play an important role regulating sodium and potassium balance. Its function is as follows. Kinase-defective isoform produced by alternative promoter usage and alternative splicing. This chain is Serine/threonine-protein kinase WNK1, found in Rattus norvegicus (Rat).